Reading from the N-terminus, the 245-residue chain is 1-(5-phosphoribosyl)-5-[(5-phosphoribosylamino)methylideneamino] imidazole-4-carboxamide isomerase (245 aa).

The Proton acceptor role is filled by aspartate 8. Residue aspartate 131 is the Proton donor of the active site.

It belongs to the HisA/HisF family.

It localises to the cytoplasm. The enzyme catalyses 1-(5-phospho-beta-D-ribosyl)-5-[(5-phospho-beta-D-ribosylamino)methylideneamino]imidazole-4-carboxamide = 5-[(5-phospho-1-deoxy-D-ribulos-1-ylimino)methylamino]-1-(5-phospho-beta-D-ribosyl)imidazole-4-carboxamide. The protein operates within amino-acid biosynthesis; L-histidine biosynthesis; L-histidine from 5-phospho-alpha-D-ribose 1-diphosphate: step 4/9. The chain is 1-(5-phosphoribosyl)-5-[(5-phosphoribosylamino)methylideneamino] imidazole-4-carboxamide isomerase from Neisseria meningitidis serogroup C / serotype 2a (strain ATCC 700532 / DSM 15464 / FAM18).